Reading from the N-terminus, the 95-residue chain is Small ribosomal subunit protein mS37 (95 aa).

The region spanning 27 to 69 (ANRCLVLMSNLLQCWSSNGHMNPVCEKLATDLKACTSQNVMGS) is the CHCH domain. Short sequence motifs (cx9C motif) lie at residues 30-40 (CLVLMSNLLQC) and 51-61 (CEKLATDLKAC). 2 disulfide bridges follow: Cys30–Cys61 and Cys40–Cys51.

The protein belongs to the mitochondrion-specific ribosomal protein mS37 family. In terms of assembly, component of the mitochondrial small ribosomal subunit.

It localises to the mitochondrion. Involved in mitochondrial genome encoded proteins translation. This Eremothecium gossypii (strain ATCC 10895 / CBS 109.51 / FGSC 9923 / NRRL Y-1056) (Yeast) protein is Small ribosomal subunit protein mS37 (MRP10).